Here is a 120-residue protein sequence, read N- to C-terminus: Large ribosomal subunit protein eL18 (120 aa).

This sequence belongs to the eukaryotic ribosomal protein eL18 family.

This is Large ribosomal subunit protein eL18 from Thermoplasma acidophilum (strain ATCC 25905 / DSM 1728 / JCM 9062 / NBRC 15155 / AMRC-C165).